A 217-amino-acid chain; its full sequence is Small ribosomal subunit protein uS3 (217 aa).

The region spanning 38–106 (IRKFIDNELK…KVHINVIEIK (69 aa)) is the KH type-2 domain.

Belongs to the universal ribosomal protein uS3 family. Part of the 30S ribosomal subunit. Forms a tight complex with proteins S10 and S14.

Binds the lower part of the 30S subunit head. Binds mRNA in the 70S ribosome, positioning it for translation. The protein is Small ribosomal subunit protein uS3 of Staphylococcus aureus (strain MSSA476).